A 328-amino-acid chain; its full sequence is MSEVTLQAFLDDWAGADPLRCAVAATVERLAEAGVSIAELVARGPLAEDFGKVRGDEANAGGDAQKELDVIAEEELVDALGRAPVAFLASEESETPIPLDPHGRVVVAVDPLDGSSNIDTNVSIGTIFSILPYDLEQHPDPAAALLQPGSAQIAAGFLVYGPATILVSSLGQGTQVFVFDHDTATFILAREKVEIPAATKEYGINQSNVRHWAKATQRYIDDCLAGKDGPRGKDFNMRWVGSLVADAFRIFTRGGVYLYPGDSRKGYADGRLRLIYEANPIAFVTEQAGGAATDGTTRILDIQPKQIHQRIPLVFGSREEVAHIASYY.

Mg(2+) is bound by residues glutamate 91, aspartate 110, leucine 112, and aspartate 113. Residues 113–116, asparagine 205, and 257–259 contribute to the substrate site; these read DGSS and YLY. Glutamate 277 provides a ligand contact to Mg(2+).

This sequence belongs to the FBPase class 1 family. As to quaternary structure, homotetramer. It depends on Mg(2+) as a cofactor.

Its subcellular location is the cytoplasm. It carries out the reaction beta-D-fructose 1,6-bisphosphate + H2O = beta-D-fructose 6-phosphate + phosphate. It participates in carbohydrate biosynthesis; gluconeogenesis. This Azorhizobium caulinodans (strain ATCC 43989 / DSM 5975 / JCM 20966 / LMG 6465 / NBRC 14845 / NCIMB 13405 / ORS 571) protein is Fructose-1,6-bisphosphatase class 1.